The primary structure comprises 83 residues: Polcalcin Bra r 2 (83 aa).

EF-hand domains lie at 5–40 (TEKA…LGSV) and 43–75 (DDIK…NRGL). Ca(2+) is bound by residues Asp-18, Asn-20, Asp-22, Lys-24, Glu-29, Asp-53, Asp-55, Asp-57, Tyr-59, and Glu-64.

This Brassica campestris (Field mustard) protein is Polcalcin Bra r 2.